Here is a 118-residue protein sequence, read N- to C-terminus: Large ribosomal subunit protein bL20 (118 aa).

Belongs to the bacterial ribosomal protein bL20 family.

Binds directly to 23S ribosomal RNA and is necessary for the in vitro assembly process of the 50S ribosomal subunit. It is not involved in the protein synthesizing functions of that subunit. The polypeptide is Large ribosomal subunit protein bL20 (rplT) (Buchnera aphidicola subsp. Acyrthosiphon pisum (strain APS) (Acyrthosiphon pisum symbiotic bacterium)).